The chain runs to 739 residues: Disintegrin and metalloproteinase domain-containing protein 18 (739 aa).

The signal sequence occupies residues 1 to 16 (MFLLLALLTELGRLQA). Positions 17–184 (HEGSEGIFLH…IKNLSKLLPQ (168 aa)) are excised as a propeptide. N-linked (GlcNAc...) asparagine glycosylation is found at N36, N76, N122, N149, N156, N177, and N294. Over 177–687 (NLSKLLPQYL…EKGYNTHWNN (511 aa)) the chain is Extracellular. Residues 184-381 (QYLEIYIIVE…FETKCLQKLS (198 aa)) form the Peptidase M12B domain. 4 cysteine pairs are disulfide-bonded: C293–C376, C335–C360, C337–C342, and C450–C471. N-linked (GlcNAc...) asparagine glycosylation is found at N359, N465, N561, N611, and N625. The 90-residue stretch at 390 to 479 (QPVCGNGILE…NCVPDTYALN (90 aa)) folds into the Disintegrin domain. Residues 620 to 654 (MGYNCNATTKCKGKGICNNFGNCQCFPGHRPPDCK) enclose the EGF-like domain. Cystine bridges form between C624–C636, C630–C642, and C644–C653. A helical membrane pass occupies residues 688-708 (WFILSFCIFLPFFIVFTTVIF). Over 709–739 (KRNEISKSCNRENAEYNRNSSVVSESDDVGH) the chain is Cytoplasmic.

The prodomain and the metalloprotease-like domain are cleaved during the epididymal maturation of the spermatozoa. In terms of tissue distribution, expressed specifically in testis.

Its subcellular location is the membrane. Sperm surface membrane protein that may be involved in spermatogenesis and fertilization. This is a non catalytic metalloprotease-like protein. This Homo sapiens (Human) protein is Disintegrin and metalloproteinase domain-containing protein 18 (ADAM18).